The following is a 319-amino-acid chain: Mitochondrial fission regulator 1-like-A (319 aa).

Residues Met1–Thr37 form a disordered region. Residues Glu9–Arg30 are compositionally biased toward basic and acidic residues.

The protein belongs to the MTFR1 family.

It localises to the mitochondrion outer membrane. In terms of biological role, mitochondrial protein required for adaptation of miochondrial dynamics to metabolic changes. Regulates mitochondrial morphology at steady state and mediates AMPK-dependent stress-induced mitochondrial fragmentation via the control of OPA1 levels. The polypeptide is Mitochondrial fission regulator 1-like-A (mtfr1l-a) (Xenopus laevis (African clawed frog)).